Here is a 176-residue protein sequence, read N- to C-terminus: Vitamin K epoxide reductase complex subunit 1-like protein 1 (176 aa).

At 1 to 13 the chain is on the cytoplasmic side; sequence MAAPVLLRVSVPR. Residues 14 to 36 form a helical membrane-spanning segment; sequence WERVARYAVCAAGILLSIYAYHV. At 37 to 87 the chain is on the lumenal side; that stretch reads EREKERDPEHRALCDLGPWVKCSAALASRWGRGFGLLGSIFGKDGVLNQPN. Cysteines 50 and 58 form a disulfide. Position 87 (Asn87) interacts with (S)-warfarin. Residues 88–102 form a helical membrane-spanning segment; that stretch reads SVFGLIFYILQLLLG. The Cytoplasmic segment spans residues 103–107; that stretch reads MTASA. A helical membrane pass occupies residues 108–135; it reads VAALVLMTSSIVSVVGSLYLAYILYFVL. Residues 136-138 are Lumenal-facing; that stretch reads KEF. Cys139 and Cys142 are disulfide-bonded. The chain crosses the membrane as a helical span at residues 139-160; that stretch reads CIICVTTYVLNFLLLIINYKRL. Residues Cys142 and Tyr146 each contribute to the phylloquinone site. Residue Tyr146 participates in (S)-warfarin binding. Residues 161 to 176 lie on the Cytoplasmic side of the membrane; the sequence is VYLNEAWKRQLQPKED.

It belongs to the VKOR family. In terms of tissue distribution, detected in testis and lung.

The protein resides in the endoplasmic reticulum membrane. It carries out the reaction phylloquinone + [protein]-disulfide + H2O = 2,3-epoxyphylloquinone + [protein]-dithiol. The catalysed reaction is phylloquinol + [protein]-disulfide = phylloquinone + [protein]-dithiol. With respect to regulation, inhibited by warfarin (coumadin). Warfarin locks VKORC1 in both redox states into the closed conformation. In terms of biological role, involved in vitamin K metabolism. Can reduce inactive vitamin K 2,3-epoxide to active vitamin K, and may contribute to vitamin K-mediated protection against oxidative stress. Plays a role in vitamin K-dependent gamma-carboxylation of Glu residues in target proteins. The protein is Vitamin K epoxide reductase complex subunit 1-like protein 1 (Vkorc1l1) of Mus musculus (Mouse).